The sequence spans 66 residues: Sodium/potassium-transporting ATPase subunit gamma (66 aa).

Residues 29 to 46 (GGLIFAGLAFVVGLLILL) traverse the membrane as a helical segment.

It belongs to the FXYD family. As to quaternary structure, regulatory subunit of the sodium/potassium-transporting ATPase which is composed of a catalytic alpha subunit, an auxiliary non-catalytic beta subunit and an additional regulatory subunit. In terms of tissue distribution, highest levels expressed in the kidney and spleen. Restricted to the basolateral membrane in renal epithelial cells and varies in its level of expression along the nephron.

It is found in the membrane. Its function is as follows. May be involved in forming the receptor site for cardiac glycoside binding or may modulate the transport function of the sodium ATPase. This chain is Sodium/potassium-transporting ATPase subunit gamma (Fxyd2), found in Rattus norvegicus (Rat).